A 317-amino-acid chain; its full sequence is tRNA dimethylallyltransferase (317 aa).

14–21 contacts ATP; sequence GPTAVGKT. Position 16–21 (16–21) interacts with substrate; that stretch reads TAVGKT. The tract at residues 39-42 is interaction with substrate tRNA; that stretch reads DSMQ.

Belongs to the IPP transferase family. As to quaternary structure, monomer. Mg(2+) is required as a cofactor.

The catalysed reaction is adenosine(37) in tRNA + dimethylallyl diphosphate = N(6)-dimethylallyladenosine(37) in tRNA + diphosphate. In terms of biological role, catalyzes the transfer of a dimethylallyl group onto the adenine at position 37 in tRNAs that read codons beginning with uridine, leading to the formation of N6-(dimethylallyl)adenosine (i(6)A). The chain is tRNA dimethylallyltransferase from Bacillus cereus (strain AH820).